The following is a 154-amino-acid chain: UPF0178 protein GM21_2006 (154 aa).

Belongs to the UPF0178 family.

The polypeptide is UPF0178 protein GM21_2006 (Geobacter sp. (strain M21)).